Consider the following 345-residue polypeptide: Heat-inducible transcription repressor HrcA (345 aa).

This sequence belongs to the HrcA family.

Functionally, negative regulator of class I heat shock genes (grpE-dnaK-dnaJ and groELS operons). Prevents heat-shock induction of these operons. The polypeptide is Heat-inducible transcription repressor HrcA (Desulfitobacterium hafniense (strain DSM 10664 / DCB-2)).